A 286-amino-acid polypeptide reads, in one-letter code: Enoyl-CoA hydratase ChsH3 (286 aa).

One can recognise a MaoC-like domain in the interval 163-271 (APERAPDLQV…RLVASVVAPT (109 aa)). Catalysis depends on residues Asp189 and His194.

It belongs to the enoyl-CoA hydratase/isomerase family. In terms of assembly, homodimer.

It catalyses the reaction (22E)-3-oxochola-4,22-dien-24-oyl-CoA + H2O = (22S)-hydroxy-3-oxo-chol-4-ene-24-oyl-CoA. It functions in the pathway steroid metabolism; cholesterol degradation. Functionally, degradation of the cholesterol side chain involves 3 multistep beta-oxidation cycles, this is involved in the second cycle. Hydrates bulky steroid enoyl-CoA esters, has highest activity with 3-OCDO-CoA (3-oxochol-4,22-dien-24-oyl-CoA) making (22S)-HOCO-CoA, followed by octenoyl-CoA, with weaker activity on 3-OCDS-CoA (3-oxocholest-4,24-dien-26-oyl-CoA) and none on 3-OPDC-CoA (3-oxo-pregna-4,17-diene-20- carboxyl-CoA). Hydrates the same substrate as EchA19, but the 2 enzymes make different stereoisomers of the product. This Mycobacterium tuberculosis (strain ATCC 25618 / H37Rv) protein is Enoyl-CoA hydratase ChsH3.